The sequence spans 376 residues: Beta-centractin (376 aa).

Methionine 1 carries the post-translational modification N-acetylmethionine. Position 4 is a 3'-nitrotyrosine (tyrosine 4).

It belongs to the actin family. ARP1 subfamily.

It localises to the cytoplasm. The protein localises to the cytoskeleton. Its subcellular location is the microtubule organizing center. The protein resides in the centrosome. Its function is as follows. Component of a multi-subunit complex involved in microtubule based vesicle motility. It is associated with the centrosome. This chain is Beta-centractin (Actr1b), found in Mus musculus (Mouse).